Consider the following 219-residue polypeptide: MSLGLVGRKVGMTRIFTAEGDSIPVTVLDVSDNRVTQIKTVETDGYTAVQVAFGTRRASRVTKPLAGHLAKAGVQAGEILKEFQIDAAKAAELSNGTVVGPDLFEVGQKVDVQGVSIGKGYAGTIKRYNFASGRASHGNSRSHNVPGSIGMAQDPGRVFPGKRMTGHMGDDTVTVQNLEIARIDADRKLLLVKGAVPGAKGGKVFVTPAVKTRAVKGAK.

Residues 134-153 form a disordered region; sequence RASHGNSRSHNVPGSIGMAQ. At Q153 the chain carries N5-methylglutamine.

The protein belongs to the universal ribosomal protein uL3 family. As to quaternary structure, part of the 50S ribosomal subunit. Forms a cluster with proteins L14 and L19. Post-translationally, methylated by PrmB.

One of the primary rRNA binding proteins, it binds directly near the 3'-end of the 23S rRNA, where it nucleates assembly of the 50S subunit. The sequence is that of Large ribosomal subunit protein uL3 from Paraburkholderia phytofirmans (strain DSM 17436 / LMG 22146 / PsJN) (Burkholderia phytofirmans).